Consider the following 275-residue polypeptide: Large ribosomal subunit protein uL2c (275 aa).

A disordered region spans residues 219–255; it reads TVRGSVMNPCDHPHGGGEGRAPIGRTRPLTPWGKPAL.

This sequence belongs to the universal ribosomal protein uL2 family. In terms of assembly, part of the 50S ribosomal subunit.

It localises to the plastid. The protein resides in the chloroplast. This Trieres chinensis (Marine centric diatom) protein is Large ribosomal subunit protein uL2c (rpl2).